Reading from the N-terminus, the 430-residue chain is Adenylosuccinate synthetase (430 aa).

GTP contacts are provided by residues 12–18 (GDEGKGK) and 40–42 (GHT). Asp-13 serves as the catalytic Proton acceptor. Residues Asp-13 and Gly-40 each contribute to the Mg(2+) site. Residues 13-16 (DEGK), 38-41 (NAGH), Thr-128, Arg-142, Gln-223, Thr-238, and Arg-302 each bind IMP. His-41 serves as the catalytic Proton donor. Residue 298–304 (VNTGRTR) coordinates substrate. GTP-binding positions include Arg-304, 330–332 (KLD), and 412–414 (GVG).

This sequence belongs to the adenylosuccinate synthetase family. Homodimer. Requires Mg(2+) as cofactor.

It is found in the cytoplasm. It carries out the reaction IMP + L-aspartate + GTP = N(6)-(1,2-dicarboxyethyl)-AMP + GDP + phosphate + 2 H(+). It participates in purine metabolism; AMP biosynthesis via de novo pathway; AMP from IMP: step 1/2. Its function is as follows. Plays an important role in the de novo pathway of purine nucleotide biosynthesis. Catalyzes the first committed step in the biosynthesis of AMP from IMP. The chain is Adenylosuccinate synthetase from Corynebacterium ammoniagenes (Brevibacterium ammoniagenes).